Here is a 621-residue protein sequence, read N- to C-terminus: Pentatricopeptide repeat-containing protein At1g12620 (621 aa).

PPR repeat units lie at residues 36–70, 71–105, 106–140, 141–175, 176–210, 211–245, 246–280, 281–315, 316–350, 351–385, 386–420, 421–455, 456–490, 491–525, 526–560, and 561–595; these read GKVSYRERLRSGIVDIKEDDAVDLFQEMTRSRPRP, RLIDFSRLFSVVARTKQYDLVLDLCKQMELKGIAH, NLYTLSIMINCCCRCRKLSLAFSAMGKIIKLGYEP, DTVTFSTLINGLCLEGRVSEALELVDRMVEMGHKP, TLITLNALVNGLCLNGKVSDAVLLIDRMVETGFQP, NEVTYGPVLKVMCKSGQTALAMELLRKMEERKIKL, DAVKYSIIIDGLCKDGSLDNAFNLFNEMEIKGFKA, DIIIYTTLIRGFCYAGRWDDGAKLLRDMIKRKITP, DVVAFSALIDCFVKEGKLREAEELHKEMIQRGISP, DTVTYTSLIDGFCKENQLDKANHMLDLMVSKGCGP, NIRTFNILINGYCKANLIDDGLELFRKMSLRGVVA, DTVTYNTLIQGFCELGKLEVAKELFQEMVSRRVRP, DIVSYKILLDGLCDNGEPEKALEIFEKIEKSKMEL, DIGIYNIIIHGMCNASKVDDAWDLFCSLPLKGVKP, DVKTYNIMIGGLCKKGSLSEADLLFRKMEEDGHSP, and NGCTYNILIRAHLGEGDATKSAKLIEEIKRCGFSV.

The protein belongs to the PPR family. P subfamily.

In Arabidopsis thaliana (Mouse-ear cress), this protein is Pentatricopeptide repeat-containing protein At1g12620.